The following is a 25-amino-acid chain: Snake venom metalloproteinase catroxase (25 aa).

Glu-9 serves as a coordination point for Ca(2+).

Belongs to the venom metalloproteinase (M12B) family. As to quaternary structure, monomer. Requires Zn(2+) as cofactor. Expressed by the venom gland.

Its subcellular location is the secreted. With respect to regulation, inhibited by EDTA, beta-mercaptoethanol, but not by PMSF, p-tosyl-L-phenylalanine chloromethyl ketone, p-tosyl-L-lysine chloromethyl ketone, soybean trypsin inhibitor and aprotinin. Functionally, metalloprotease that is highly active against alpha-(FGA) and beta-chains (FGB) of fibrinogen molecules. The protein is Snake venom metalloproteinase catroxase of Crotalus atrox (Western diamondback rattlesnake).